The chain runs to 332 residues: Tetraacyldisaccharide 4'-kinase (332 aa).

55 to 62 (GVGGSGKT) is an ATP binding site.

This sequence belongs to the LpxK family.

The catalysed reaction is a lipid A disaccharide + ATP = a lipid IVA + ADP + H(+). It participates in glycolipid biosynthesis; lipid IV(A) biosynthesis; lipid IV(A) from (3R)-3-hydroxytetradecanoyl-[acyl-carrier-protein] and UDP-N-acetyl-alpha-D-glucosamine: step 6/6. Its function is as follows. Transfers the gamma-phosphate of ATP to the 4'-position of a tetraacyldisaccharide 1-phosphate intermediate (termed DS-1-P) to form tetraacyldisaccharide 1,4'-bis-phosphate (lipid IVA). The sequence is that of Tetraacyldisaccharide 4'-kinase from Acidithiobacillus ferrooxidans (strain ATCC 53993 / BNL-5-31) (Leptospirillum ferrooxidans (ATCC 53993)).